The following is a 139-amino-acid chain: Ribulose bisphosphate carboxylase small subunit (139 aa).

Belongs to the RuBisCO small chain family. In terms of assembly, heterohexadecamer of 8 large and 8 small subunits.

It localises to the plastid. The protein resides in the chloroplast. Functionally, ruBisCO catalyzes two reactions: the carboxylation of D-ribulose 1,5-bisphosphate, the primary event in carbon dioxide fixation, as well as the oxidative fragmentation of the pentose substrate in the photorespiration process. Both reactions occur simultaneously and in competition at the same active site. Although the small subunit is not catalytic it is essential for maximal activity. The protein is Ribulose bisphosphate carboxylase small subunit of Cylindrotheca sp. (strain N1) (Marine diatom).